The following is a 120-amino-acid chain: Seripauperin-10 (120 aa).

Positions 1 to 20 (MVKLTSIAAGVAAIAATASA) are cleaved as a signal peptide.

This sequence belongs to the SRP1/TIP1 family. Seripauperin subfamily.

In Saccharomyces cerevisiae (strain ATCC 204508 / S288c) (Baker's yeast), this protein is Seripauperin-10 (PAU10).